Consider the following 272-residue polypeptide: 5'-nucleotidase SurE (272 aa).

4 residues coordinate a divalent metal cation: Asp28, Asp29, Ser59, and Asn115.

It belongs to the SurE nucleotidase family. Requires a divalent metal cation as cofactor.

The protein localises to the cytoplasm. It carries out the reaction a ribonucleoside 5'-phosphate + H2O = a ribonucleoside + phosphate. Its function is as follows. Nucleotidase that shows phosphatase activity on nucleoside 5'-monophosphates. The sequence is that of 5'-nucleotidase SurE from Chlorobium chlorochromatii (strain CaD3).